Consider the following 160-residue polypeptide: MIELEVFPHRYLKAETTENFLNSAYSFSTVERVVIHGESLPKKVGYGPAKGSPVNHSEKKEITVKGVPVELNLQVGRLWVLLKDESEIEKIDELCKELFPFGYRLTKGKFLRDTPTVSDFIKYGESAVENIDPKLLSATDPRSKFQNSVKMIPKSENSTE.

In terms of assembly, MCR is composed of three subunits: alpha, beta, and gamma. The function of proteins C and D is not known.

In Methanococcus vannielii, this protein is Methyl-coenzyme M reductase operon protein D (mcrD).